We begin with the raw amino-acid sequence, 147 residues long: uncharacterized protein (147 aa).

It belongs to the MG185/MG260 family.

This is an uncharacterized protein from Mycoplasma pneumoniae (strain ATCC 29342 / M129 / Subtype 1) (Mycoplasmoides pneumoniae).